The sequence spans 240 residues: Homeobox-leucine zipper protein HOX14 (240 aa).

The interval 26–64 is disordered; that stretch reads SGEVQGERPRARRRRRRGARCVGGGGGGGEVDGGDPKKR. The segment covering 35-44 has biased composition (basic residues); that stretch reads RARRRRRRGA. Residues 46 to 56 are compositionally biased toward gly residues; that stretch reads CVGGGGGGGEV. The homeobox DNA-binding region spans 59–118; sequence GDPKKRRLSDEQVEMLELSFREERKLETGRKVHLASELGLDPKQVAVWFQNRRARHKSKL. A coiled-coil region spans residues 108–167; the sequence is QNRRARHKSKLLEEEFSKLKHAHDAAILHKCHLENEVLRLKERLVVAEEEVRRLRSAAGS.

It belongs to the HD-ZIP homeobox family. Class I subfamily. Expressed in roots, stems, leaf blades and panicles.

Its subcellular location is the nucleus. Its function is as follows. Probable transcription factor. In Oryza sativa subsp. japonica (Rice), this protein is Homeobox-leucine zipper protein HOX14 (HOX14).